The sequence spans 95 residues: Small ribosomal subunit protein bS6 (95 aa).

Belongs to the bacterial ribosomal protein bS6 family.

Binds together with bS18 to 16S ribosomal RNA. The polypeptide is Small ribosomal subunit protein bS6 (Bacillus velezensis (strain DSM 23117 / BGSC 10A6 / LMG 26770 / FZB42) (Bacillus amyloliquefaciens subsp. plantarum)).